The primary structure comprises 420 residues: Pre-mRNA-splicing factor RBM22 (420 aa).

A2 carries the N-acetylalanine modification. A phosphoserine mark is found at S4 and S102. Residues K139 and K149 each participate in a glycyl lysine isopeptide (Lys-Gly) (interchain with G-Cter in SUMO2) cross-link. The C3H1-type zinc-finger motif lies at 159-186 (RNRPHICSFWVKGECKRGEECPYRHEKP). K212 is subject to N6-acetyllysine. The region spanning 232 to 305 (TTLYVGGLGD…RRLNVKWGRS (74 aa)) is the RRM domain. A Glycyl lysine isopeptide (Lys-Gly) (interchain with G-Cter in SUMO2) cross-link involves residue K290. Disordered regions lie at residues 303–343 (GRSQ…AAEE) and 372–420 (APPP…HSSP). Over residues 309 to 318 (RGKEKEKDGT) the composition is skewed to basic and acidic residues.

The protein belongs to the SLT11 family. Component of the pre-catalytic and catalytic spliceosome complexes. Component of the postcatalytic spliceosome P complex. Interacts with PDCD6; the interaction induces translocation of PDCD6 in the cytoplasm. Interacts with PPIL1.

Its subcellular location is the nucleus. It localises to the cytoplasm. In terms of biological role, required for pre-mRNA splicing as component of the activated spliceosome. Involved in the first step of pre-mRNA splicing. Binds directly to the internal stem-loop (ISL) domain of the U6 snRNA and to the pre-mRNA intron near the 5' splice site during the activation and catalytic phases of the spliceosome cycle. Involved in both translocations of the nuclear SLU7 to the cytoplasm and the cytosolic calcium-binding protein PDCD6 to the nucleus upon cellular stress responses. This chain is Pre-mRNA-splicing factor RBM22 (RBM22), found in Bos taurus (Bovine).